A 691-amino-acid chain; its full sequence is Replication and transcription activator (691 aa).

O-linked (GlcNAc) threonine; by host glycans are attached at residues threonine 366 and threonine 367. Disordered stretches follow at residues 482–582 (EASG…SLPP) and 626–677 (LDTP…QESG). Positions 504–513 (TAAATAAEAT) are enriched in low complexity. Residues 515–531 (PKRKQRSKERSSKKRKA) are compositionally biased toward basic residues. A compositionally biased stretch (low complexity) spans 539–556 (TTPSTTTPGTSLGSITTP). Residues 655–677 (EYTQLQPVRATSATPANEVQESG) show a composition bias toward polar residues.

This sequence belongs to the herpesviridae TAF50 family. In terms of assembly, homotetramer. Interacts with KTA/ORF57. Interacts with host PARP1; this interaction negatively regulates RTA/ORF50 transactivation activity. Interacts with host SMC5 and SMC6; these interactions remove the repressive chromatin structure to allow viral reactivation. Interacts with host POU2F1; this interaction enhances RTA/ORF50-mediated transactivation of several viral promoters including K-bZIP promoter.

Its subcellular location is the host nucleus. The catalysed reaction is S-ubiquitinyl-[E2 ubiquitin-conjugating enzyme]-L-cysteine + [acceptor protein]-L-lysine = [E2 ubiquitin-conjugating enzyme]-L-cysteine + N(6)-ubiquitinyl-[acceptor protein]-L-lysine.. Transcriptional transactivator that is necessary and sufficient for reactivation of the virus from latency. Acts post-transcriptionally and transcriptionally to regulate viral lytic gene expression and synergistically with ORF57 activates certain early and late viral promoters including its own promoter. Autostimulation on its promoter is mediated by the formation of a ternary complex between ORF50 and the cellular components HGMB1 and POU2F1. Also possesses a bimodal activity in targeting proteins for degradation through using its own E3 ligase activity or by stabilizing and chaperoning host E3 ligases. These activities help to subvert the host innate and adaptive immune responses while also modulating the host transcriptome and protein landscape to promote virus production. For instance, targets the host SMC5/6 complex for ubiquitination and subsequent degradation through the ubiquitin-proteasome during reactivation while during latency, host SMC5/6 complex binds to the viral episome and condenses viral chromatin, creating a repressive chromatin structure to silence genome transcription. Hijacks the cellular E3 ligase complex RNF20/40 to increase the level of transcriptionally active RNA polymerase II on viral gene promoters thereby facilitating lytic gene expression. Acts as a SUMO-targeting ubiquitin ligase and affects general sumoylation of cellular proteins. Promotes the polyubiquitination and subsequent degradation of host MYD88 and thereby inhibits MYD88-mediated TLR4 signaling. Induces the degradation of vFLIP/ORF71 together with cellular ubiquitin ligase ITCH to prevent vFLIP-induced NF-kappa-B signaling. The sequence is that of Replication and transcription activator (ORF50) from Homo sapiens (Human).